The sequence spans 303 residues: UDP-3-O-acyl-N-acetylglucosamine deacetylase (303 aa).

Zn(2+) contacts are provided by histidine 78, histidine 237, and aspartate 241. Residue histidine 264 is the Proton donor of the active site.

The protein belongs to the LpxC family. The cofactor is Zn(2+).

It catalyses the reaction a UDP-3-O-[(3R)-3-hydroxyacyl]-N-acetyl-alpha-D-glucosamine + H2O = a UDP-3-O-[(3R)-3-hydroxyacyl]-alpha-D-glucosamine + acetate. It functions in the pathway glycolipid biosynthesis; lipid IV(A) biosynthesis; lipid IV(A) from (3R)-3-hydroxytetradecanoyl-[acyl-carrier-protein] and UDP-N-acetyl-alpha-D-glucosamine: step 2/6. In terms of biological role, catalyzes the hydrolysis of UDP-3-O-myristoyl-N-acetylglucosamine to form UDP-3-O-myristoylglucosamine and acetate, the committed step in lipid A biosynthesis. This Xanthomonas euvesicatoria pv. vesicatoria (strain 85-10) (Xanthomonas campestris pv. vesicatoria) protein is UDP-3-O-acyl-N-acetylglucosamine deacetylase.